An 885-amino-acid polypeptide reads, in one-letter code: Glycerol-3-phosphate acyltransferase (885 aa).

Positions 1 to 17 (MPEQNPLPFPDGQPSPP) are enriched in pro residues. A disordered region spans residues 1 to 26 (MPEQNPLPFPDGQPSPPSTAAADTGA). Residues 362 to 367 (HRSHMD) carry the HXXXXD motif motif.

The protein belongs to the GPAT/DAPAT family.

It localises to the cell inner membrane. It catalyses the reaction sn-glycerol 3-phosphate + an acyl-CoA = a 1-acyl-sn-glycero-3-phosphate + CoA. It functions in the pathway phospholipid metabolism; CDP-diacylglycerol biosynthesis; CDP-diacylglycerol from sn-glycerol 3-phosphate: step 1/3. The protein is Glycerol-3-phosphate acyltransferase of Xanthomonas axonopodis pv. citri (strain 306).